Reading from the N-terminus, the 570-residue chain is MRARSALPRSALPRLLLPLLLLPAAGPAQFHGEKGISIPDHGFCQPISIPLCTDIAYNQTIMPNLLGHTNQEDAGLEVHQFYPLVKVQCSPELRFFLCSMYAPVCTVLEQAIPPCRSICERARQGCEALMNKFGFQWPERLRCEHFPRHGAEQICVGQNHSEDGAPALLTTAPPSGLQPGAGGTPGGPGGGGSPPRYATLEHPFHCPRVLKVPSYLSYKFLGERDCAAPCEPARPDGSMFFSQEETRFARLWILTWSVLCCASTFFTVTTYLVDMQRFRYPERPIIFLSGCYTMVSVAYIAGFVLQERVVCNERFSEDGYRTVVQGTKKEGCTILFMMLYFFSMASSIWWVILSLTWFLAAGMKWGHEAIEANSQYFHLAAWAVPAVKTITILAMGQIDGDLLSGVCFVGLNSLDPLRGFVLAPLFVYLFIGTSFLLAGFVSLFRIRTIMKHDGTKTEKLERLMVRIGVFSVLYTVPATIVIACYFYEQAFREHWERSWVSQHCKSLAIPCPAHYTPRMSPDFTVYMIKYLMTLIVGITSGFWIWSGKTLHSWRKFYTRLTNSRHGETTV.

The signal sequence occupies residues 1–28 (MRARSALPRSALPRLLLPLLLLPAAGPA). Residues 29–252 (QFHGEKGISI…QEETRFARLW (224 aa)) are Extracellular-facing. In terms of domain architecture, FZ spans 39–158 (PDHGFCQPIS…HGAEQICVGQ (120 aa)). 5 disulfides stabilise this stretch: cysteine 44/cysteine 105, cysteine 52/cysteine 98, cysteine 89/cysteine 126, cysteine 115/cysteine 155, and cysteine 119/cysteine 143. N-linked (GlcNAc...) asparagine glycosylation occurs at asparagine 58. The N-linked (GlcNAc...) asparagine glycan is linked to asparagine 159. The interval 166-194 (PALLTTAPPSGLQPGAGGTPGGPGGGGSP) is disordered. A compositionally biased stretch (gly residues) spans 179–193 (PGAGGTPGGPGGGGS). A helical transmembrane segment spans residues 253 to 273 (ILTWSVLCCASTFFTVTTYLV). Residues 274–284 (DMQRFRYPERP) lie on the Cytoplasmic side of the membrane. Residues 285-305 (IIFLSGCYTMVSVAYIAGFVL) form a helical membrane-spanning segment. Residues 306–332 (QERVVCNERFSEDGYRTVVQGTKKEGC) lie on the Extracellular side of the membrane. A helical transmembrane segment spans residues 333–353 (TILFMMLYFFSMASSIWWVIL). Residues 354–375 (SLTWFLAAGMKWGHEAIEANSQ) are Cytoplasmic-facing. A helical transmembrane segment spans residues 376–396 (YFHLAAWAVPAVKTITILAMG). Residues 397–419 (QIDGDLLSGVCFVGLNSLDPLRG) lie on the Extracellular side of the membrane. The helical transmembrane segment at 420–440 (FVLAPLFVYLFIGTSFLLAGF) threads the bilayer. Residues 441–466 (VSLFRIRTIMKHDGTKTEKLERLMVR) are Cytoplasmic-facing. The chain crosses the membrane as a helical span at residues 467-487 (IGVFSVLYTVPATIVIACYFY). The Extracellular portion of the chain corresponds to 488 to 524 (EQAFREHWERSWVSQHCKSLAIPCPAHYTPRMSPDFT). The chain crosses the membrane as a helical span at residues 525–545 (VYMIKYLMTLIVGITSGFWIW). The Cytoplasmic segment spans residues 546-570 (SGKTLHSWRKFYTRLTNSRHGETTV). Residues 548–553 (KTLHSW) carry the Lys-Thr-X-X-X-Trp motif, mediates interaction with the PDZ domain of Dvl family members motif. Positions 568–570 (TTV) match the PDZ-binding motif.

It belongs to the G-protein coupled receptor Fz/Smo family. In terms of processing, ubiquitinated by ZNRF3, leading to its degradation by the proteasome. In terms of tissue distribution, expressed in embryonic and adult heart, lung, chondrocytes and brain. Also expressed in the developing gastrointestinal tract (strongest in foregut), much weaker expression in the adult. No expression in fetal liver and adult spleen. Up-regulated in esophageal squamous cell carcinomas.

Its subcellular location is the membrane. It localises to the cell membrane. Its function is as follows. Receptor for Wnt proteins. Most of frizzled receptors are coupled to the beta-catenin canonical signaling pathway, which leads to the activation of disheveled proteins, inhibition of GSK-3 kinase, nuclear accumulation of beta-catenin and activation of Wnt target genes. A second signaling pathway involving PKC and calcium fluxes has been seen for some family members, but it is not yet clear if it represents a distinct pathway or if it can be integrated in the canonical pathway, as PKC seems to be required for Wnt-mediated inactivation of GSK-3 kinase. Both pathways seem to involve interactions with G-proteins. May be involved in transduction and intercellular transmission of polarity information during tissue morphogenesis and/or in differentiated tissues. This Mus musculus (Mouse) protein is Frizzled-2 (Fzd2).